The chain runs to 1391 residues: DNA-directed RNA polymerase subunit beta' (1391 aa).

Zn(2+) is bound by residues C72, C74, C87, and C90. Residues D462, D464, and D466 each contribute to the Mg(2+) site. Positions 816, 890, 897, and 900 each coordinate Zn(2+).

This sequence belongs to the RNA polymerase beta' chain family. In terms of assembly, the RNAP catalytic core consists of 2 alpha, 1 beta, 1 beta' and 1 omega subunit. When a sigma factor is associated with the core the holoenzyme is formed, which can initiate transcription. Mg(2+) is required as a cofactor. The cofactor is Zn(2+).

It catalyses the reaction RNA(n) + a ribonucleoside 5'-triphosphate = RNA(n+1) + diphosphate. DNA-dependent RNA polymerase catalyzes the transcription of DNA into RNA using the four ribonucleoside triphosphates as substrates. This is DNA-directed RNA polymerase subunit beta' from Neisseria gonorrhoeae (strain ATCC 700825 / FA 1090).